Consider the following 477-residue polypeptide: 3-sulfolactaldehyde dehydrogenase (477 aa).

232 to 233 (GS) contributes to the NAD(+) binding site. E252 (proton acceptor) is an active-site residue. Position 253 (L253) interacts with NAD(+). Residue C286 is the Nucleophile of the active site. E380 contacts NAD(+).

It belongs to the aldehyde dehydrogenase family.

The catalysed reaction is (2S)-3-sulfolactaldehyde + NAD(+) + H2O = (2S)-3-sulfolactate + NADH + 2 H(+). Its function is as follows. Part of the sulfo-TAL (or sulfo-SFT) pathway, a D-sulfoquinovose degradation pathway that produces sulfolactate (SL). Catalyzes the oxidation of 3-sulfolactaldehyde (SLA) to sulfolactate (SL). The sequence is that of 3-sulfolactaldehyde dehydrogenase from Priestia aryabhattai (Bacillus aryabhattai).